Consider the following 690-residue polypeptide: Elongation factor G (690 aa).

The tr-type G domain occupies 8–283 (EDYRNFGIMA…AVVAYLPSPL (276 aa)). GTP is bound by residues 17-24 (AHIDAGKT), 81-85 (DTPGH), and 135-138 (NKMD).

The protein belongs to the TRAFAC class translation factor GTPase superfamily. Classic translation factor GTPase family. EF-G/EF-2 subfamily.

The protein localises to the cytoplasm. In terms of biological role, catalyzes the GTP-dependent ribosomal translocation step during translation elongation. During this step, the ribosome changes from the pre-translocational (PRE) to the post-translocational (POST) state as the newly formed A-site-bound peptidyl-tRNA and P-site-bound deacylated tRNA move to the P and E sites, respectively. Catalyzes the coordinated movement of the two tRNA molecules, the mRNA and conformational changes in the ribosome. The chain is Elongation factor G from Nitrobacter winogradskyi (strain ATCC 25391 / DSM 10237 / CIP 104748 / NCIMB 11846 / Nb-255).